The chain runs to 616 residues: Chaperone protein HscA homolog (616 aa).

This sequence belongs to the heat shock protein 70 family.

Functionally, chaperone involved in the maturation of iron-sulfur cluster-containing proteins. Has a low intrinsic ATPase activity which is markedly stimulated by HscB. The chain is Chaperone protein HscA homolog from Histophilus somni (strain 2336) (Haemophilus somnus).